Reading from the N-terminus, the 88-residue chain is Large ribosomal subunit protein bL27 (88 aa).

Residues 1 to 13 (MATKKGASSSSNG) are compositionally biased toward polar residues. The tract at residues 1-25 (MATKKGASSSSNGRDSEAKRLGVKR) is disordered.

It belongs to the bacterial ribosomal protein bL27 family.

This is Large ribosomal subunit protein bL27 from Corynebacterium efficiens (strain DSM 44549 / YS-314 / AJ 12310 / JCM 11189 / NBRC 100395).